We begin with the raw amino-acid sequence, 325 residues long: Xylosidase/arabinosidase (325 aa).

Catalysis depends on aspartate 16, which acts as the Proton acceptor. Glutamate 224 functions as the Proton donor in the catalytic mechanism.

This sequence belongs to the glycosyl hydrolase 43 family.

It carries out the reaction Hydrolysis of (1-&gt;4)-beta-D-xylans, to remove successive D-xylose residues from the non-reducing termini.. It catalyses the reaction Hydrolysis of terminal non-reducing alpha-L-arabinofuranoside residues in alpha-L-arabinosides.. This chain is Xylosidase/arabinosidase (xsa), found in Bacteroides ovatus.